Consider the following 329-residue polypeptide: Beta-ketoacyl-[acyl-carrier-protein] synthase III (329 aa).

Residues Cys-114 and His-254 contribute to the active site. The segment at 255–259 (QANLR) is ACP-binding. Asn-284 is a catalytic residue.

This sequence belongs to the thiolase-like superfamily. FabH family. In terms of assembly, homodimer.

It localises to the cytoplasm. It catalyses the reaction malonyl-[ACP] + acetyl-CoA + H(+) = 3-oxobutanoyl-[ACP] + CO2 + CoA. It participates in lipid metabolism; fatty acid biosynthesis. Catalyzes the condensation reaction of fatty acid synthesis by the addition to an acyl acceptor of two carbons from malonyl-ACP. Catalyzes the first condensation reaction which initiates fatty acid synthesis and may therefore play a role in governing the total rate of fatty acid production. Possesses both acetoacetyl-ACP synthase and acetyl transacylase activities. Its substrate specificity determines the biosynthesis of branched-chain and/or straight-chain of fatty acids. The polypeptide is Beta-ketoacyl-[acyl-carrier-protein] synthase III (Roseiflexus sp. (strain RS-1)).